The following is a 1003-amino-acid chain: Pumilio homolog 4 (1003 aa).

Residues 38–65 are disordered; the sequence is QHRNQQSFGRERERDIDVHRSGSAPPTV. A compositionally biased stretch (basic and acidic residues) spans 46-57; the sequence is GRERERDIDVHR. Serine 225 bears the Phosphoserine mark. Over residues 285-300 the composition is skewed to polar residues; sequence KNSPNTMLGSTMSSPV. Residues 285 to 328 form a disordered region; the sequence is KNSPNTMLGSTMSSPVPRNRTPDSHLVGRSTASGLPPIGTRVGP. Threonine 305 carries the post-translational modification Phosphothreonine. Residues 644 to 984 enclose the PUM-HD domain; it reads AEASLLEGFK…HIVARVEKLI (341 aa). Pumilio repeat units lie at residues 664 to 699, 700 to 735, 736 to 771, 772 to 807, 808 to 843, 845 to 880, 881 to 916, and 917 to 958; these read EIVG…AIFP, EILP…ELAE, QVTG…RMVK, ELDG…FIIS, SFYG…RIIM, EIMD…EIIN, KLAG…VLVN, and EMLG…LILS.

The protein localises to the cytoplasm. In terms of biological role, sequence-specific RNA-binding protein that regulates translation and mRNA stability by binding the 3'-UTR of target mRNAs. Binds the APUM-binding elements (APBEs) in the 3'-UTR mRNA sequence of CLV1, PNH, WUS and FAS2. This chain is Pumilio homolog 4 (APUM4), found in Arabidopsis thaliana (Mouse-ear cress).